The sequence spans 294 residues: Diaminopimelate epimerase (294 aa).

Residues N15, Q47, and N67 each contribute to the substrate site. Residue C76 is the Proton donor of the active site. Substrate is bound by residues 77 to 78 (GN), N163, N197, and 215 to 216 (ER). Residue C224 is the Proton acceptor of the active site. Residue 225-226 (GS) participates in substrate binding.

This sequence belongs to the diaminopimelate epimerase family. In terms of assembly, homodimer.

Its subcellular location is the cytoplasm. It carries out the reaction (2S,6S)-2,6-diaminopimelate = meso-2,6-diaminopimelate. It functions in the pathway amino-acid biosynthesis; L-lysine biosynthesis via DAP pathway; DL-2,6-diaminopimelate from LL-2,6-diaminopimelate: step 1/1. In terms of biological role, catalyzes the stereoinversion of LL-2,6-diaminopimelate (L,L-DAP) to meso-diaminopimelate (meso-DAP), a precursor of L-lysine and an essential component of the bacterial peptidoglycan. The protein is Diaminopimelate epimerase of Mesorhizobium japonicum (strain LMG 29417 / CECT 9101 / MAFF 303099) (Mesorhizobium loti (strain MAFF 303099)).